Here is a 638-residue protein sequence, read N- to C-terminus: Sodium- and chloride-dependent glycine transporter 1 (638 aa).

Residues 1–30 (MAVAHGPVATSSPEQNGAVPSEATKKDQNL) are disordered. Residues 1–40 (MAVAHGPVATSSPEQNGAVPSEATKKDQNLTRGNWGNQIE) are Cytoplasmic-facing. 3 consecutive transmembrane segments (helical) span residues 41-61 (FVLT…FPYL), 68-88 (GAFM…LFFM), and 120-140 (VSTY…YYFF). Over 141-217 (SSMTHVLPWA…LSDDIGDFGE (77 aa)) the chain is Extracellular. N-linked (GlcNAc...) asparagine glycans are attached at residues asparagine 169, asparagine 172, asparagine 182, and asparagine 188. 9 helical membrane passes run 218–238 (VRLP…LCLI), 247–267 (VVYF…VRGV), 292–312 (VWGD…GGLI), 339–359 (SVYA…HLGV), 382–402 (LLPI…LLGL), 438–458 (VAGF…WLLL), 462–482 (YAAS…IMYI), 502–522 (LFFQ…ILIF), and 542–562 (VAIG…YALF). At 563-638 (QLCRTDGDTL…GSSRLQDSRI (76 aa)) the chain is on the cytoplasmic side. Threonine 603 is modified (phosphothreonine). A phosphoserine mark is found at serine 605 and serine 630. Positions 627–638 (SNGSSRLQDSRI) are essential for interaction with EXOC1.

It belongs to the sodium:neurotransmitter symporter (SNF) (TC 2.A.22) family. SLC6A9 subfamily. As to quaternary structure, interacts with EXOC1; interaction increases the transporter capacity of SLC6A9 probably by promoting its insertion into the cell membrane. Interacts with EXOC3 and EXOC4. Found only in the white matter of the CNS. In terms of tissue distribution, found in the gray matter of CNS as well as in macrophages and mast cells in peripheral tissues.

The protein resides in the cell membrane. The catalysed reaction is glycine(out) + chloride(out) + 2 Na(+)(out) = glycine(in) + chloride(in) + 2 Na(+)(in). With respect to regulation, inhibited by sarcosine. Sodium- and chloride-dependent glycine transporter. Essential for regulating glycine concentrations at inhibitory glycinergic synapses. This chain is Sodium- and chloride-dependent glycine transporter 1 (Slc6a9), found in Rattus norvegicus (Rat).